Reading from the N-terminus, the 457-residue chain is tRNA modification GTPase MnmE (457 aa).

(6S)-5-formyl-5,6,7,8-tetrahydrofolate is bound by residues Arg-22, Glu-83, and Arg-122. In terms of domain architecture, TrmE-type G spans 219–378; sequence GLATAIIGRP…LEEAIKTLFF (160 aa). Asn-229 lines the K(+) pocket. GTP is bound by residues 229 to 234, 248 to 254, and 273 to 276; these read NVGKSS, TDIAGTT, and DTAG. Ser-233 serves as a coordination point for Mg(2+). The K(+) site is built by Thr-248, Ile-250, and Thr-253. A Mg(2+)-binding site is contributed by Thr-254. Residue Lys-457 participates in (6S)-5-formyl-5,6,7,8-tetrahydrofolate binding.

This sequence belongs to the TRAFAC class TrmE-Era-EngA-EngB-Septin-like GTPase superfamily. TrmE GTPase family. In terms of assembly, homodimer. Heterotetramer of two MnmE and two MnmG subunits. Requires K(+) as cofactor.

Its subcellular location is the cytoplasm. Exhibits a very high intrinsic GTPase hydrolysis rate. Involved in the addition of a carboxymethylaminomethyl (cmnm) group at the wobble position (U34) of certain tRNAs, forming tRNA-cmnm(5)s(2)U34. In Listeria welshimeri serovar 6b (strain ATCC 35897 / DSM 20650 / CCUG 15529 / CIP 8149 / NCTC 11857 / SLCC 5334 / V8), this protein is tRNA modification GTPase MnmE.